The sequence spans 569 residues: 63 kDa chaperonin, mitochondrial (569 aa).

The transit peptide at 1 to 29 directs the protein to the mitochondrion; it reads MFKMYRSPHITRNSFKYLKATNINSCRFY.

Belongs to the chaperonin (HSP60) family. Forms a single seven-member ring complex, in tight association with the p60 protein. Testis.

It localises to the mitochondrion. Its function is as follows. Implicated in mitochondrial protein import and macromolecular assembly. May facilitate the correct folding of imported proteins. May also prevent misfolding and promote the refolding and proper assembly of unfolded polypeptides generated under stress conditions in the mitochondrial matrix. This is 63 kDa chaperonin, mitochondrial from Heliothis virescens (Tobacco budworm moth).